A 195-amino-acid chain; its full sequence is Inner membrane-spanning protein YciB (195 aa).

Transmembrane regions (helical) follow at residues 34 to 54, 65 to 85, 88 to 108, 131 to 151, and 160 to 180; these read IYGA…ALWL, FTLG…EDTF, WKAP…HFIG, LNIA…YVVF, and FKVF…GLFL.

The protein belongs to the YciB family.

It is found in the cell inner membrane. Plays a role in cell envelope biogenesis, maintenance of cell envelope integrity and membrane homeostasis. This chain is Inner membrane-spanning protein YciB, found in Pseudomonas aeruginosa (strain LESB58).